Consider the following 356-residue polypeptide: Molybdenum import ATP-binding protein ModC (356 aa).

The region spanning 1 to 232 (MEDIHARFHI…LDLPIRLGED (232 aa)) is the ABC transporter domain. 33–40 (GHSGSGKT) contacts ATP. Residues 291–356 (ETSVLNLLRG…VQVKSVALME (66 aa)) form the Mop domain.

Belongs to the ABC transporter superfamily. Molybdate importer (TC 3.A.1.8) family. As to quaternary structure, the complex is composed of two ATP-binding proteins (ModC), two transmembrane proteins (ModB) and a solute-binding protein (ModA).

It localises to the cell inner membrane. The catalysed reaction is molybdate(out) + ATP + H2O = molybdate(in) + ADP + phosphate + H(+). Functionally, part of the ABC transporter complex ModABC involved in molybdenum import. Responsible for energy coupling to the transport system. In Methylococcus capsulatus (strain ATCC 33009 / NCIMB 11132 / Bath), this protein is Molybdenum import ATP-binding protein ModC.